The following is an 809-amino-acid chain: Eukaryotic translation initiation factor 3 subunit C (809 aa).

Positions M1–K102 are disordered. Acidic residues-rich tracts occupy residues S18–L30 and S37–D59. Residues F605 to E780 enclose the PCI domain.

The protein belongs to the eIF-3 subunit C family. Component of the eukaryotic translation initiation factor 3 (eIF-3) complex.

The protein resides in the cytoplasm. In terms of biological role, component of the eukaryotic translation initiation factor 3 (eIF-3) complex, which is involved in protein synthesis of a specialized repertoire of mRNAs and, together with other initiation factors, stimulates binding of mRNA and methionyl-tRNAi to the 40S ribosome. The eIF-3 complex specifically targets and initiates translation of a subset of mRNAs involved in cell proliferation. This chain is Eukaryotic translation initiation factor 3 subunit C, found in Vanderwaltozyma polyspora (strain ATCC 22028 / DSM 70294 / BCRC 21397 / CBS 2163 / NBRC 10782 / NRRL Y-8283 / UCD 57-17) (Kluyveromyces polysporus).